Consider the following 102-residue polypeptide: Small ribosomal subunit protein uS10 (102 aa).

This sequence belongs to the universal ribosomal protein uS10 family. In terms of assembly, part of the 30S ribosomal subunit.

In terms of biological role, involved in the binding of tRNA to the ribosomes. This Thermotoga neapolitana (strain ATCC 49049 / DSM 4359 / NBRC 107923 / NS-E) protein is Small ribosomal subunit protein uS10.